The following is a 370-amino-acid chain: GTPase Obg (370 aa).

The 159-residue stretch at Met-1 to Leu-159 folds into the Obg domain. The OBG-type G domain occupies Ala-160 to Ala-334. GTP contacts are provided by residues Gly-166–Ser-173, Phe-191–Ala-195, Asp-213–Gly-216, Asn-284–Asp-287, and Ser-315–Leu-317. Positions 173 and 193 each coordinate Mg(2+). Residues Glu-344–Ala-370 are disordered.

This sequence belongs to the TRAFAC class OBG-HflX-like GTPase superfamily. OBG GTPase family. As to quaternary structure, monomer. The cofactor is Mg(2+).

The protein localises to the cytoplasm. Its function is as follows. An essential GTPase which binds GTP, GDP and possibly (p)ppGpp with moderate affinity, with high nucleotide exchange rates and a fairly low GTP hydrolysis rate. Plays a role in control of the cell cycle, stress response, ribosome biogenesis and in those bacteria that undergo differentiation, in morphogenesis control. This Burkholderia ambifaria (strain MC40-6) protein is GTPase Obg.